The sequence spans 176 residues: ATP-dependent protease subunit HslV (176 aa).

Thr-2 is a catalytic residue. 3 residues coordinate Na(+): Gly-157, Cys-160, and Thr-163.

It belongs to the peptidase T1B family. HslV subfamily. A double ring-shaped homohexamer of HslV is capped on each side by a ring-shaped HslU homohexamer. The assembly of the HslU/HslV complex is dependent on binding of ATP.

Its subcellular location is the cytoplasm. It carries out the reaction ATP-dependent cleavage of peptide bonds with broad specificity.. Allosterically activated by HslU binding. Its function is as follows. Protease subunit of a proteasome-like degradation complex believed to be a general protein degrading machinery. In Photorhabdus laumondii subsp. laumondii (strain DSM 15139 / CIP 105565 / TT01) (Photorhabdus luminescens subsp. laumondii), this protein is ATP-dependent protease subunit HslV.